A 38-amino-acid chain; its full sequence is Large ribosomal subunit protein bL36A (38 aa).

This sequence belongs to the bacterial ribosomal protein bL36 family.

This Enterobacter sp. (strain 638) protein is Large ribosomal subunit protein bL36A.